The chain runs to 658 residues: Translation factor GUF1, mitochondrial (658 aa).

A mitochondrion-targeting transit peptide spans 1–40 (MRGCLQTVRWLTSAWQRPPSYPPLSRAAPCRFFNVSIPRN). Residues 60–240 (DRFRNFCIVA…TVVEQIPAPV (181 aa)) enclose the tr-type G domain. Residues 69 to 76 (AHVDHGKS), 133 to 137 (DTPGH), and 187 to 190 (NKVD) contribute to the GTP site.

It belongs to the TRAFAC class translation factor GTPase superfamily. Classic translation factor GTPase family. LepA subfamily.

The protein resides in the mitochondrion inner membrane. It catalyses the reaction GTP + H2O = GDP + phosphate + H(+). Its function is as follows. Promotes mitochondrial protein synthesis. May act as a fidelity factor of the translation reaction, by catalyzing a one-codon backward translocation of tRNAs on improperly translocated ribosomes. Binds to mitochondrial ribosomes in a GTP-dependent manner. The protein is Translation factor GUF1, mitochondrial of Paracoccidioides brasiliensis (strain Pb03).